A 735-amino-acid polypeptide reads, in one-letter code: 1,4-alpha-glucan branching enzyme GlgB 1 (735 aa).

The active-site Nucleophile is D418. Residue E471 is the Proton donor of the active site.

Belongs to the glycosyl hydrolase 13 family. GlgB subfamily. As to quaternary structure, monomer.

The catalysed reaction is Transfers a segment of a (1-&gt;4)-alpha-D-glucan chain to a primary hydroxy group in a similar glucan chain.. Its pathway is glycan biosynthesis; glycogen biosynthesis. Functionally, catalyzes the formation of the alpha-1,6-glucosidic linkages in glycogen by scission of a 1,4-alpha-linked oligosaccharide from growing alpha-1,4-glucan chains and the subsequent attachment of the oligosaccharide to the alpha-1,6 position. The polypeptide is 1,4-alpha-glucan branching enzyme GlgB 1 (Rhizobium johnstonii (strain DSM 114642 / LMG 32736 / 3841) (Rhizobium leguminosarum bv. viciae)).